A 367-amino-acid polypeptide reads, in one-letter code: Phosphoribosylaminoimidazole-succinocarboxamide synthase (367 aa).

It belongs to the SAICAR synthetase family.

The enzyme catalyses 5-amino-1-(5-phospho-D-ribosyl)imidazole-4-carboxylate + L-aspartate + ATP = (2S)-2-[5-amino-1-(5-phospho-beta-D-ribosyl)imidazole-4-carboxamido]succinate + ADP + phosphate + 2 H(+). Its pathway is purine metabolism; IMP biosynthesis via de novo pathway; 5-amino-1-(5-phospho-D-ribosyl)imidazole-4-carboxamide from 5-amino-1-(5-phospho-D-ribosyl)imidazole-4-carboxylate: step 1/2. This Aliivibrio fischeri (strain ATCC 700601 / ES114) (Vibrio fischeri) protein is Phosphoribosylaminoimidazole-succinocarboxamide synthase.